The chain runs to 607 residues: MSPPPPQRPSPSRAGRANLFSSPPPPLPNCYDPKHRRPAPPPLPSARRLPSNRRRRHDQPPNPTTGNGGNPAFRAPHLRTAYRKPVPPVAAAGEGEALLAADASDAADGRAVVVGPSGLSFRLPGAPFDFRFSYSECPRAPPVAIREPAFLPFAPPTMPRPWTGKAPLLTKEEKARRRGVRLHTPLGEEAPRTVSAHGIMMEVRGRRKLDLARVSPGDGRSREEVLGEPLTAAEVRDLVKPHISHNRQLNIGRDGLTHNMLEMIHCHWRRQEICKVRCRGVPTVDMKNLCYHLEEKSGGKVIHRVGGVVFLYRGRNYNPRTRPRYPLMLWKPATPVYPKLIQEAPEGLTKEEADEMRRRGKDLLPICKLAKNGIYIYLVRDVRDAFEGSDLVKIDCEGLNPSDYKKIGAKLRDLVPCVLLSFDNEQILMFRGKEWKSRYPKPLTLIPKIRKNNVPMSSDESSSDEATDDDDRLAVREVLRPKMFELWTNAIESSVALMLDDAEVDALTPDSLLTRVEDFSVTSQVVEHSFPAVLVANDESNPDVLNAEYTEDEPETGTLEPQQHEFTESSDVAEDDHFEDDMLKRLESSVPLGALPIDAVVKQLNDE.

The tract at residues 1–75 is disordered; sequence MSPPPPQRPS…GNGGNPAFRA (75 aa). The N-terminal 79 residues, 1-79, are a transit peptide targeting the chloroplast; it reads MSPPPPQRPS…NPAFRAPHLR (79 aa). CRM domains follow at residues 228–324 and 346–442; these read EPLT…TRPR and EGLT…YPKP. The interval 482-505 is CRS2 binding; the sequence is KMFELWTNAIESSVALMLDDAEVD. A disordered region spans residues 550–576; the sequence is TEDEPETGTLEPQQHEFTESSDVAEDD.

Interacts with CRS2 and RNA. Part of large ribonucleo-protein complexes that include group IIB introns, CRS2 and CAF2.

It localises to the plastid. The protein resides in the chloroplast stroma. In terms of biological role, required for the splicing of group IIB introns in chloroplasts. Forms splicing particles with CRS2. Interacts with RNA and confers intron specificity of the splicing particles. The sequence is that of CRS2-associated factor 2, chloroplastic from Oryza sativa subsp. japonica (Rice).